Here is a 146-residue protein sequence, read N- to C-terminus: VQWTAEEKQLITGLWGKVNVAECGAEALARLLIVYPWTQRFFASFGNLSSPTAVLGNPKVQAHGKKVLTSFGDAVKNLDSIKNTFSQLSELHCDKLHVDPENFRLLGDILVVVLAAHFGKDFTPDCQAAWQKLVRVVAHALARKYH.

In terms of domain architecture, Globin spans 2 to 146; sequence QWTAEEKQLI…VAHALARKYH (145 aa). Residues H63 and H92 each coordinate heme b.

The protein belongs to the globin family. Heterotetramer of two alpha chains and two beta chains. As to expression, red blood cells.

In terms of biological role, involved in oxygen transport from the lung to the various peripheral tissues. In Sturnus vulgaris (Starling), this protein is Hemoglobin subunit beta (HBB).